The primary structure comprises 400 residues: Putative C-type lectin domain family 20 member A (400 aa).

A signal peptide spans 1-20 (MLPRALLLSFCAAALQLVSS). C-type lectin domains lie at 26 to 131 (LVKE…FLCY) and 159 to 275 (ISGQ…FFCF). 4 cysteine pairs are disulfide-bonded: Cys-40–Cys-130, Cys-105–Cys-122, Cys-180–Cys-274, and Cys-248–Cys-266. Residues 287-346 (ELPPLFHTSPTEMTEETTPRPGRAVASVGSGTDRRDTAAATEAQHLSSESKEKTSAQKSG) form a disordered region.

The polypeptide is Putative C-type lectin domain family 20 member A (Homo sapiens (Human)).